Here is an 83-residue protein sequence, read N- to C-terminus: Parvalbumin beta 3 (83 aa).

2 EF-hand domains span residues 13-48 (KSND…FSAG) and 52-83 (LTAG…LVKA). Aspartate 26, aspartate 28, serine 30, phenylalanine 32, glutamate 34, glutamate 37, aspartate 65, aspartate 67, aspartate 69, methionine 71, and glutamate 76 together coordinate Ca(2+).

It belongs to the parvalbumin family.

In terms of biological role, in muscle, parvalbumin is thought to be involved in relaxation after contraction. It binds two calcium ions. The sequence is that of Parvalbumin beta 3 from Macruronus novaezelandiae (Blue grenadier).